The following is a 367-amino-acid chain: Serine/threonine-protein kinase-transforming protein Rmil (367 aa).

Residues 1–64 (EGGSTAGLSA…DSSDDWEIPD (64 aa)) are disordered. Residues 33–57 (QRERKSSSSSEDRNRMKTLGRRDSS) show a composition bias toward basic and acidic residues. A Protein kinase domain is found at 67 to 327 (ITVGQRIGSG…PQILASIELL (261 aa)). ATP-binding positions include 73 to 81 (IGSGSFGTV) and Lys93. The Proton acceptor role is filled by Asp186.

The protein belongs to the protein kinase superfamily. TKL Ser/Thr protein kinase family. RAF subfamily.

The catalysed reaction is L-seryl-[protein] + ATP = O-phospho-L-seryl-[protein] + ADP + H(+). It carries out the reaction L-threonyl-[protein] + ATP = O-phospho-L-threonyl-[protein] + ADP + H(+). This is Serine/threonine-protein kinase-transforming protein Rmil (V-RMIL) from Avian retrovirus IC10.